We begin with the raw amino-acid sequence, 215 residues long: MSPKTRLDSDFFGPGDRWQTVAGVDEVGRGCLFGPVVTAAVILPETAIAPLQQAGVTDSKRLSQRQRQQLYPLICEVALATGWGLASVAEIERWNILQATFLAMRRAIAKLDRPISRCLIDGNQQVPQLTYPQTTVIQGDRHCITIAAASILAKVWRDRLIERLDERYPGYALGRHKGYGTAQHRQAILQLGPTPLHRIRFLRSLRQPSQQIDLF.

The 195-residue stretch at 19-213 (QTVAGVDEVG…SLRQPSQQID (195 aa)) folds into the RNase H type-2 domain. A divalent metal cation is bound by residues D25, E26, and D121.

It belongs to the RNase HII family. The cofactor is Mn(2+). It depends on Mg(2+) as a cofactor.

It is found in the cytoplasm. The catalysed reaction is Endonucleolytic cleavage to 5'-phosphomonoester.. Endonuclease that specifically degrades the RNA of RNA-DNA hybrids. In Synechococcus elongatus (strain ATCC 33912 / PCC 7942 / FACHB-805) (Anacystis nidulans R2), this protein is Ribonuclease HII.